A 314-amino-acid polypeptide reads, in one-letter code: Vacuolar membrane protein FOSTERSB_4073 (314 aa).

The interval 32 to 60 (KPTSSVVSETSSKSLPSLTSSAFSTSSGA) is disordered. A helical membrane pass occupies residues 93-113 (VYIAVGAVIGAIFISILIWWL). Phosphoserine is present on residues serine 148, serine 254, and serine 274. Residues 240-309 (EERKLNLNRP…PSMFLDDVLN (70 aa)) form a disordered region. The span at 254–269 (SPERKEKKINSMEGYH) shows a compositional bias: basic and acidic residues.

It belongs to the PRM5 family.

It localises to the vacuole membrane. This is Vacuolar membrane protein FOSTERSB_4073 from Saccharomyces cerevisiae (strain FostersB) (Baker's yeast).